A 155-amino-acid chain; its full sequence is Histone H3-like 3 (155 aa).

Positions 34–59 are disordered; sequence IGVKLPNSYRPGDQTVCKPAPPTDGV.

Belongs to the histone H3 family. As to quaternary structure, the nucleosome is a histone octamer containing two molecules each of H2A, H2B, H3 and H4 assembled in one H3-H4 heterotetramer and two H2A-H2B heterodimers. The octamer wraps approximately 147 bp of DNA. In terms of tissue distribution, pollen specific.

Its subcellular location is the nucleus. The protein localises to the chromosome. Its function is as follows. Core component of nucleosome. Nucleosomes wrap and compact DNA into chromatin, limiting DNA accessibility to the cellular machineries which require DNA as a template. Histones thereby play a central role in transcription regulation, DNA repair, DNA replication and chromosomal stability. DNA accessibility is regulated via a complex set of post-translational modifications of histones, also called histone code, and nucleosome remodeling. The sequence is that of Histone H3-like 3 (leH3) from Lilium longiflorum (Trumpet lily).